The sequence spans 458 residues: Protein unc-93 homolog A (458 aa).

The next 5 membrane-spanning stretches (helical) occupy residues 8–28 (VLVVSCGFLLLFTAYGGLQNL), 42–62 (TLSTLYASVLLSSMFLPPILI), 69–89 (WTIVGSMCCYVVFSLGNFHAN), 90–110 (WYTLIPTSILLGLGAAPLWSA), and 140–160 (IFFLVFQSSGVWGNLISSLVF). Asn-190 carries N-linked (GlcNAc...) asparagine glycosylation. 7 helical membrane-spanning segments follow: residues 202 to 222 (TLLGIYTGCGVLAILLVAVFL), 258 to 275 (LCLLMFLPLYSGFQQEFL), 286 to 306 (CALGIHFVGYVMICFSAMTAL), 321 to 341 (AALYALGAAIHFSCIVVFLLW), 345 to 365 (TNQLPVFFVLSGLWGMSDAVW), 390 to 410 (LGEAIGFVIAFGYSSFLCVST), and 412 to 432 (LYILLGVLSLAMVGYGTVEYL).

It belongs to the unc-93 family.

Its subcellular location is the cell membrane. The sequence is that of Protein unc-93 homolog A (Unc93a) from Mus musculus (Mouse).